The primary structure comprises 1014 residues: Probable sucrose-phosphate synthase 5 (1014 aa).

2 stretches are compositionally biased toward basic and acidic residues: residues 29-41 (RRLEQELGSREAA) and 49-58 (EGEKDGKPDT). 2 disordered regions span residues 29–108 (RRLE…SDEE) and 648–677 (QLLRVPPSPSSSSAAAAAAGGGGAAASSEP).

It belongs to the glycosyltransferase 1 family. In terms of assembly, homodimer or homotetramer. As to expression, expressed in germinating seeds.

It carries out the reaction beta-D-fructose 6-phosphate + UDP-alpha-D-glucose = sucrose 6(F)-phosphate + UDP + H(+). It participates in glycan biosynthesis; sucrose biosynthesis; sucrose from D-fructose 6-phosphate and UDP-alpha-D-glucose: step 1/2. Its activity is regulated as follows. Activity is regulated by phosphorylation and moderated by concentration of metabolites and light. Its function is as follows. Plays a role in photosynthetic sucrose synthesis by catalyzing the rate-limiting step of sucrose biosynthesis from UDP-glucose and fructose- 6-phosphate. Involved in the regulation of carbon partitioning in the leaves of plants. May regulate the synthesis of sucrose and therefore play a major role as a limiting factor in the export of photoassimilates out of the leaf. Plays a role for sucrose availability that is essential for plant growth and fiber elongation. In Oryza sativa subsp. japonica (Rice), this protein is Probable sucrose-phosphate synthase 5 (SPS5).